The chain runs to 81 residues: Large ribosomal subunit protein bL31B (81 aa).

This sequence belongs to the bacterial ribosomal protein bL31 family. Type B subfamily. Part of the 50S ribosomal subunit.

The sequence is that of Large ribosomal subunit protein bL31B from Borreliella afzelii (strain PKo) (Borrelia afzelii).